Reading from the N-terminus, the 148-residue chain is Ribonuclease pancreatic (148 aa).

Residues 1 to 25 (MGLEKSLILLPLLVLVFGWVQSSLG) form the signal peptide. Residues Lys32 and Arg35 each coordinate substrate. Residue His36 is the Proton acceptor of the active site. Cystine bridges form between Cys50-Cys108, Cys64-Cys119, Cys82-Cys134, and Cys89-Cys96. Asn58 carries N-linked (GlcNAc...) asparagine glycosylation. 65–69 (KPVNT) contacts substrate. An N-linked (GlcNAc...) asparagine glycan is attached at Asn86. Substrate is bound by residues Lys90 and Arg109. The Proton donor role is filled by His143.

This sequence belongs to the pancreatic ribonuclease family. As to quaternary structure, monomer. Interacts with and forms tight 1:1 complexes with RNH1. Dimerization of two such complexes may occur. Interaction with RNH1 inhibits this protein. As to expression, pancreas.

It localises to the secreted. It catalyses the reaction an [RNA] containing cytidine + H2O = an [RNA]-3'-cytidine-3'-phosphate + a 5'-hydroxy-ribonucleotide-3'-[RNA].. The catalysed reaction is an [RNA] containing uridine + H2O = an [RNA]-3'-uridine-3'-phosphate + a 5'-hydroxy-ribonucleotide-3'-[RNA].. Endonuclease that catalyzes the cleavage of RNA on the 3' side of pyrimidine nucleotides. Acts on single-stranded and double-stranded RNA. This is Ribonuclease pancreatic (RNASE1) from Chionomys nivalis (European snow vole).